The chain runs to 94 residues: MIFLLPSIISVMLLAEPVLMLGDTEDADLMEMVQLSRPFFNPIIRAVELVELREERQRDCGHLHDPCPNDRPGHRTCCIGLQCRYGKCLVRVGR.

Residues 1–22 (MIFLLPSIISVMLLAEPVLMLG) form the signal peptide. Residues 23-58 (DTEDADLMEMVQLSRPFFNPIIRAVELVELREERQR) constitute a propeptide that is removed on maturation. Disulfide bonds link C60/C78, C67/C83, and C77/C88. V92 bears the Valine amide mark.

It belongs to the neurotoxin 14 (magi-1) family. OAIP-1 subfamily. In terms of tissue distribution, expressed by the venom gland.

Its subcellular location is the secreted. Probable ion channel inhibitor. Shows insecticidal activity. Acts synergistically with the neonicotinoid insecticide imidacloprid. Is neither a repellent that repels insects nor an attractant that is preferentially consumed by insects. Is very stable. This Selenotypus plumipes (Australian featherleg tarantula) protein is U1-theraphotoxin-Sp1a.